The following is a 283-amino-acid chain: Accumulation of dyads protein 2 (283 aa).

The segment at methionine 1–serine 41 is disordered. Topologically, residues methionine 1–asparagine 89 are cytoplasmic. Residues proline 90–alanine 110 form a helical membrane-spanning segment. Residues arginine 111–valine 120 are Extracellular-facing. A helical membrane pass occupies residues valine 121–isoleucine 141. At alanine 142–alanine 151 the chain is on the cytoplasmic side. Residues leucine 152–isoleucine 172 form a helical membrane-spanning segment. At leucine 173 to asparagine 185 the chain is on the extracellular side. The helical transmembrane segment at alanine 186–methionine 206 threads the bilayer. Topologically, residues lysine 207–serine 208 are cytoplasmic. Residues threonine 209–glycine 229 traverse the membrane as a helical segment. Topologically, residues histidine 230–alanine 240 are extracellular. A helical transmembrane segment spans residues glycine 241 to alanine 261. At threonine 262–phenylalanine 283 the chain is on the cytoplasmic side.

The protein belongs to the acetate uptake transporter (AceTr) (TC 2.A.96) family.

The protein localises to the cell membrane. It localises to the vacuole membrane. Its function is as follows. Transporter protein required for ammonia export and acetate uptake and resistance. Necessary for up-regulation and down-regulation of meiotic plaque (MP) component levels in a dependency on external acetate. Has a role in ascus formation. The polypeptide is Accumulation of dyads protein 2 (ADY2) (Saccharomyces cerevisiae (strain ATCC 204508 / S288c) (Baker's yeast)).